A 99-amino-acid chain; its full sequence is UPF0320 protein YER188C-A (99 aa).

This sequence belongs to the UPF0320 family.

This Saccharomyces cerevisiae (strain ATCC 204508 / S288c) (Baker's yeast) protein is UPF0320 protein YER188C-A.